The chain runs to 489 residues: Retinoblastoma-binding protein 5 homolog (489 aa).

WD repeat units lie at residues 22–63 (DCIS…KIIS), 64–103 (AHVH…LEHK), 147–187 (DSDG…VVAS), 195–234 (SSAT…TLGK), 248–290 (VNKT…KILH), and 292–330 (TKGE…NWSA). The tract at residues 451–489 (DVSLPDAPTDETHPLISSKASKDKQQPVGGKKAAGRTKK) is disordered.

As to quaternary structure, core component of several methyltransferase-containing complexes. Component of the SET1 complex, composed at least of the catalytic subunit Set1, wds/WDR5, Wdr82, Rbbp5, ash2, Cfp1/CXXC1, hcf and Dpy-30L1. Component of the MLL3/4 complex composed at least of the catalytic subunit trr, ash2, Rbbp5, Dpy-30L1, wds, hcf, ptip, Pa1, Utx, Lpt and Ncoa6.

The protein localises to the nucleus. Functionally, component of the SET1 complex that specifically di- and trimethylates 'Lys-4' of histone H3 and of the MLL3/4 complex which also methylates histone H3 'Lys-4'. The protein is Retinoblastoma-binding protein 5 homolog of Drosophila melanogaster (Fruit fly).